The sequence spans 1100 residues: DNA repair protein RAD1 (1100 aa).

Positions 1 to 47 (MSQLFYQGDSDDELQEELTRQTTQASQSSKIKNEDEPDDSNHLNEVE) are disordered. The span at 20-30 (RQTTQASQSSK) shows a compositional bias: polar residues. Positions 31 to 47 (IKNEDEPDDSNHLNEVE) are enriched in basic and acidic residues. Phosphoserine is present on Ser613. The ERCC4 domain maps to 821–901 (VVIVDTREFN…YPTLLIEFDE (81 aa)). The interval 1063-1100 (EKEEQEQESTDENLESPGKTTDDNALHDHHNDVPEAPV) is disordered. Residues 1065–1076 (EEQEQESTDENL) are compositionally biased toward acidic residues. Ser1071 carries the phosphoserine modification. Thr1072 is modified (phosphothreonine). A compositionally biased stretch (basic and acidic residues) spans 1082–1100 (TTDDNALHDHHNDVPEAPV).

The protein belongs to the XPF family. In terms of assembly, component of the nucleotide excision repair factor 1 (NEF1) complex consisting of RAD1, RAD10 and RAD14. Interacts with SAW1.

The protein localises to the nucleus. Involved in nucleotide excision repair of DNA damaged with UV light, bulky adducts, or cross-linking agents. Along with RAD10 forms an endonuclease that specifically degrades single-stranded DNA. This chain is DNA repair protein RAD1 (RAD1), found in Saccharomyces cerevisiae (strain ATCC 204508 / S288c) (Baker's yeast).